Here is a 1132-residue protein sequence, read N- to C-terminus: Cytospin-A (1132 aa).

Positions 1 to 166 are disordered; sequence MKKAGRPVGN…SKSDGQLSDK (166 aa). Composition is skewed to low complexity over residues 73–109 and 119–129; these read STHS…SKES and SRNSSSKKQSS. Residues 150 to 159 are compositionally biased toward basic and acidic residues; sequence SESRMSKSKS. Residues 226-268 are a coiled coil; that stretch reads DVESTLLLLQEQNQAIRGELNLLKNENRMLKDRLNALGFSLEQ. A disordered region spans residues 301-381; sequence ASSVEGSAPG…RKGSSGNTSE (81 aa). The span at 333-343 shows a compositional bias: polar residues; the sequence is SEVYQAVTSSD. Over residues 348-377 the composition is skewed to low complexity; that stretch reads APSGCGSSSSSESEGGPPACRSSSRKGSSG. Coiled coils occupy residues 385–440 and 478–798; these read ACLT…MDSL and RYME…RGRV. Disordered stretches follow at residues 869-895 and 939-1016; these read TSTT…AAAV and SRPA…RKDP. A compositionally biased stretch (pro residues) spans 875-889; that stretch reads APLPRTPLSPSPMKT. Positions 946–961 are enriched in polar residues; sequence QRVSNMDTSKTITVSR. Residues 962–972 are compositionally biased toward basic and acidic residues; it reads RSSEEPKRDIS. Over residues 979 to 1000 the composition is skewed to low complexity; it reads ASSLISMSSAAALSSSSSPTAS. Residues 1026–1131 form the Calponin-homology (CH) domain; that stretch reads GSKRNALLRW…YVTSIYKYFE (106 aa).

Belongs to the cytospin-A family. As to quaternary structure, may interact with both microtubules and actin cytoskeleton.

Its subcellular location is the cytoplasm. It is found in the cytoskeleton. The protein localises to the spindle. The protein resides in the cell junction. It localises to the gap junction. Functionally, involved in cytokinesis and spindle organization. May play a role in actin cytoskeleton organization and microtubule stabilization and hence required for proper cell adhesion and migration. In Danio rerio (Zebrafish), this protein is Cytospin-A (specc1la).